A 495-amino-acid polypeptide reads, in one-letter code: Glycerol kinase (495 aa).

T16 provides a ligand contact to ADP. 2 residues coordinate ATP: T16 and T17. Residue T16 coordinates sn-glycerol 3-phosphate. R20 lines the ADP pocket. Positions 86, 87, 138, and 246 each coordinate sn-glycerol 3-phosphate. Positions 86, 87, 138, 246, and 247 each coordinate glycerol. Positions 268 and 316 each coordinate ADP. T268, G316, Q320, and G417 together coordinate ATP. ADP is bound by residues G417 and N421.

This sequence belongs to the FGGY kinase family.

The catalysed reaction is glycerol + ATP = sn-glycerol 3-phosphate + ADP + H(+). It functions in the pathway polyol metabolism; glycerol degradation via glycerol kinase pathway; sn-glycerol 3-phosphate from glycerol: step 1/1. Inhibited by fructose 1,6-bisphosphate (FBP). In terms of biological role, key enzyme in the regulation of glycerol uptake and metabolism. Catalyzes the phosphorylation of glycerol to yield sn-glycerol 3-phosphate. The polypeptide is Glycerol kinase (Synechocystis sp. (strain ATCC 27184 / PCC 6803 / Kazusa)).